A 160-amino-acid chain; its full sequence is Cyclic pyranopterin monophosphate synthase (160 aa).

Substrate is bound by residues 77 to 79 (MCH) and 114 to 115 (ME). Residue D129 is part of the active site.

The protein belongs to the MoaC family. In terms of assembly, homohexamer; trimer of dimers.

It carries out the reaction (8S)-3',8-cyclo-7,8-dihydroguanosine 5'-triphosphate = cyclic pyranopterin phosphate + diphosphate. It functions in the pathway cofactor biosynthesis; molybdopterin biosynthesis. Catalyzes the conversion of (8S)-3',8-cyclo-7,8-dihydroguanosine 5'-triphosphate to cyclic pyranopterin monophosphate (cPMP). This chain is Cyclic pyranopterin monophosphate synthase, found in Listeria monocytogenes serotype 4b (strain F2365).